A 199-amino-acid chain; its full sequence is Protein-methionine-sulfoxide reductase heme-binding subunit MsrQ (199 aa).

The next 6 helical transmembrane spans lie at 8–28 (IAWL…WLFW), 54–74 (FLLA…PLLI), 82–102 (LWCF…ELGI), 116–136 (PYLT…ATST), 149–169 (LLHN…LWSV), and 171–191 (IVSP…ACRY).

The protein belongs to the MsrQ family. In terms of assembly, heterodimer of a catalytic subunit (MsrP) and a heme-binding subunit (MsrQ). FMN serves as cofactor. Heme b is required as a cofactor.

The protein resides in the cell inner membrane. In terms of biological role, part of the MsrPQ system that repairs oxidized periplasmic proteins containing methionine sulfoxide residues (Met-O), using respiratory chain electrons. Thus protects these proteins from oxidative-stress damage caused by reactive species of oxygen and chlorine generated by the host defense mechanisms. MsrPQ is essential for the maintenance of envelope integrity under bleach stress, rescuing a wide series of structurally unrelated periplasmic proteins from methionine oxidation. MsrQ provides electrons for reduction to the reductase catalytic subunit MsrP, using the quinone pool of the respiratory chain. The protein is Protein-methionine-sulfoxide reductase heme-binding subunit MsrQ of Klebsiella pneumoniae (strain 342).